We begin with the raw amino-acid sequence, 200 residues long: Crossover junction endodeoxyribonuclease RuvC (200 aa).

Residues Asp-18, Glu-78, and Asp-151 contribute to the active site. Residues Asp-18, Glu-78, and Asp-151 each coordinate Mg(2+).

Belongs to the RuvC family. In terms of assembly, homodimer which binds Holliday junction (HJ) DNA. The HJ becomes 2-fold symmetrical on binding to RuvC with unstacked arms; it has a different conformation from HJ DNA in complex with RuvA. In the full resolvosome a probable DNA-RuvA(4)-RuvB(12)-RuvC(2) complex forms which resolves the HJ. Mg(2+) serves as cofactor.

The protein localises to the cytoplasm. It catalyses the reaction Endonucleolytic cleavage at a junction such as a reciprocal single-stranded crossover between two homologous DNA duplexes (Holliday junction).. In terms of biological role, the RuvA-RuvB-RuvC complex processes Holliday junction (HJ) DNA during genetic recombination and DNA repair. Endonuclease that resolves HJ intermediates. Cleaves cruciform DNA by making single-stranded nicks across the HJ at symmetrical positions within the homologous arms, yielding a 5'-phosphate and a 3'-hydroxyl group; requires a central core of homology in the junction. The consensus cleavage sequence is 5'-(A/T)TT(C/G)-3'. Cleavage occurs on the 3'-side of the TT dinucleotide at the point of strand exchange. HJ branch migration catalyzed by RuvA-RuvB allows RuvC to scan DNA until it finds its consensus sequence, where it cleaves and resolves the cruciform DNA. In Cytophaga hutchinsonii (strain ATCC 33406 / DSM 1761 / CIP 103989 / NBRC 15051 / NCIMB 9469 / D465), this protein is Crossover junction endodeoxyribonuclease RuvC.